Consider the following 582-residue polypeptide: Arginine--tRNA ligase (582 aa).

A 'HIGH' region motif is present at residues 136–146 (ANPTGPMHMGH).

The protein belongs to the class-I aminoacyl-tRNA synthetase family. In terms of assembly, monomer.

The protein resides in the cytoplasm. The enzyme catalyses tRNA(Arg) + L-arginine + ATP = L-arginyl-tRNA(Arg) + AMP + diphosphate. The chain is Arginine--tRNA ligase from Novosphingobium aromaticivorans (strain ATCC 700278 / DSM 12444 / CCUG 56034 / CIP 105152 / NBRC 16084 / F199).